The primary structure comprises 288 residues: 4-diphosphocytidyl-2-C-methyl-D-erythritol kinase (288 aa).

Residue lysine 8 is part of the active site. Position 90–100 (90–100) interacts with ATP; that stretch reads PFGAGLGGGSS. The active site involves aspartate 132.

It belongs to the GHMP kinase family. IspE subfamily.

It catalyses the reaction 4-CDP-2-C-methyl-D-erythritol + ATP = 4-CDP-2-C-methyl-D-erythritol 2-phosphate + ADP + H(+). Its pathway is isoprenoid biosynthesis; isopentenyl diphosphate biosynthesis via DXP pathway; isopentenyl diphosphate from 1-deoxy-D-xylulose 5-phosphate: step 3/6. Its function is as follows. Catalyzes the phosphorylation of the position 2 hydroxy group of 4-diphosphocytidyl-2C-methyl-D-erythritol. The sequence is that of 4-diphosphocytidyl-2-C-methyl-D-erythritol kinase from Chlorobium chlorochromatii (strain CaD3).